The chain runs to 241 residues: Glutathione S-transferase omega-1 (241 aa).

Ser2 bears the N-acetylserine mark. In terms of domain architecture, GST N-terminal spans 22–101; sequence GSIRIYSMRF…YLDEAYPGKK (80 aa). Cys32 serves as the catalytic Nucleophile. Residue Lys57 is modified to N6-acetyllysine. Glutathione is bound by residues Lys59, Val72, and 85–86; that span reads ES. The GST C-terminal domain maps to 106–230; sequence DPYEKACQKM…DWQGFLELYL (125 aa). Residue Ser129 is modified to Phosphoserine. N6-acetyllysine is present on residues Lys143, Lys148, and Lys152.

This sequence belongs to the GST superfamily. Omega family. In terms of assembly, homodimer. In terms of tissue distribution, ubiquitous. Highest expression in liver, pancreas, skeletal muscle, spleen, thymus, colon, blood leukocyte and heart. Lowest expression in brain, placenta and lung.

It is found in the cytoplasm. It localises to the cytosol. The catalysed reaction is RX + glutathione = an S-substituted glutathione + a halide anion + H(+). It carries out the reaction L-dehydroascorbate + 2 glutathione = glutathione disulfide + L-ascorbate. The enzyme catalyses methylarsonate + 2 glutathione + H(+) = methylarsonous acid + glutathione disulfide + H2O. Monomethylarsonic acid reductase activity is competitively inhibited by 1-chloro 2,4-dinitrobenzene (CDNB) and by deoxycholate. Its function is as follows. Exhibits glutathione-dependent thiol transferase and dehydroascorbate reductase activities. Has S-(phenacyl)glutathione reductase activity. Also has glutathione S-transferase activity. Participates in the biotransformation of inorganic arsenic and reduces monomethylarsonic acid (MMA) and dimethylarsonic acid. The chain is Glutathione S-transferase omega-1 (GSTO1) from Homo sapiens (Human).